The sequence spans 546 residues: Nuclear pore complex protein Nup58 (546 aa).

17 consecutive repeat copies span residues 22–23 (FG), 36–37 (FG), 45–46 (FG), 64–65 (FG), 73–74 (FG), 82–83 (FG), 92–93 (FG), 101–102 (FG), 110–111 (FG), 119–120 (FG), 128–129 (FG), 137–138 (FG), 146–147 (FG), 155–156 (FG), 166–167 (FG), 197–198 (FG), and 199–200 (FG). A 17 X 2 AA repeats of F-G region spans residues 22 to 200 (FGARPATTTA…TTAPPAFGFG (179 aa)).

Belongs to the NUP58 family. Component of the nuclear pore complex. Interacts with Nup54. Interacts (via C-terminus) with fs(1)Yb; this interaction occurs in a RNA-independent manner. Interacts with sbr/nxf1. Interacts with Nxt1. O-glycosylated; contains O-GlcNAc. O-GlcNAcylation increases with increasing ambient temperature.

It is found in the nucleus. The protein localises to the nuclear pore complex. Functionally, component of the nuclear pore complex, a complex required for the trafficking across the nuclear membrane. Together with Nup54, required for transposable element silencing regulation in ovarian follicle cells. By interacting with the nuclear (Nxf1/Nxt1) and cytosolic (fs(1)Yb) components of the flamenco (flam) transcripts processing pathway, enables export and subsequent piRNA production. This is Nuclear pore complex protein Nup58 from Drosophila melanogaster (Fruit fly).